Consider the following 343-residue polypeptide: Dihydroorotate dehydrogenase (quinone) (343 aa).

FMN-binding positions include 61–65 (AGLDK) and threonine 85. Lysine 65 contributes to the substrate binding site. Position 110-114 (110-114 (NRMGF)) interacts with substrate. FMN-binding residues include asparagine 138 and asparagine 171. Asparagine 171 is a binding site for substrate. Residue serine 174 is the Nucleophile of the active site. Asparagine 176 serves as a coordination point for substrate. 2 residues coordinate FMN: lysine 216 and threonine 244. 245–246 (NT) provides a ligand contact to substrate. FMN is bound by residues glycine 267, glycine 296, and 317-318 (YS).

Belongs to the dihydroorotate dehydrogenase family. Type 2 subfamily. In terms of assembly, monomer. FMN is required as a cofactor.

It is found in the cell membrane. It carries out the reaction (S)-dihydroorotate + a quinone = orotate + a quinol. Its pathway is pyrimidine metabolism; UMP biosynthesis via de novo pathway; orotate from (S)-dihydroorotate (quinone route): step 1/1. Functionally, catalyzes the conversion of dihydroorotate to orotate with quinone as electron acceptor. This is Dihydroorotate dehydrogenase (quinone) from Pseudomonas savastanoi pv. phaseolicola (strain 1448A / Race 6) (Pseudomonas syringae pv. phaseolicola (strain 1448A / Race 6)).